We begin with the raw amino-acid sequence, 539 residues long: Transcription factor LG2 (539 aa).

Residues 115-125 show a composition bias toward polar residues; that stretch reads MRQQQQLHSGN. Disordered stretches follow at residues 115–140 and 181–246; these read MRQQQQLHSGNSQSVGSTTDSSSAQN and KPGL…KSRL. Composition is skewed to low complexity over residues 126-137 and 192-205; these read SQSVGSTTDSSS and QQQHQLQHHQQQQL. Positions 219–242 are enriched in basic and acidic residues; the sequence is TRKDGKSVDAKTERRLAQNREAAR. A bZIP domain is found at 227-271; that stretch reads DAKTERRLAQNREAARKSRLRKKAYVQNLETSRVRLQQIEQELQR. The segment at 229 to 249 is basic motif; that stretch reads KTERRLAQNREAARKSRLRKK. A leucine-zipper region spans residues 255–269; it reads LETSRVRLQQIEQEL. Positions 292–506 constitute a DOG1 domain; it reads AAMFDMEYAR…RALSNLWSSR (215 aa). Residues 513-539 are disordered; it reads GTESVSPTGTELQPMHNQPQQNQYSGF.

Belongs to the bZIP family. Interacts with NPR1/NH1 and NPR3/NH3.

It localises to the nucleus. In terms of biological role, transcriptional regulator involved in defense response. Acts as a transcriptional activator in vitro. This is Transcription factor LG2 from Oryza sativa subsp. japonica (Rice).